We begin with the raw amino-acid sequence, 479 residues long: uncharacterized protein (479 aa).

The next 8 helical transmembrane spans lie at 25–45 (VVFV…LFFF), 63–83 (IAMI…LAGG), 110–130 (LFGP…TVIF), 133–153 (GVFN…AGIL), 175–195 (VLSI…VLGI), 229–249 (ILLY…IVWL), 287–307 (LILN…IAFI), and 328–348 (LFAP…LLLL).

This sequence in the C-terminal section; belongs to the GatC family.

Its subcellular location is the cell membrane. This is an uncharacterized protein from Mycoplasma pneumoniae (strain ATCC 29342 / M129 / Subtype 1) (Mycoplasmoides pneumoniae).